Here is a 294-residue protein sequence, read N- to C-terminus: Survival motor neuron protein (294 aa).

Residues 1–10 are compositionally biased toward gly residues; it reads MAMSSGGSGS. A disordered region spans residues 1-32; the sequence is MAMSSGGSGSGVPEQEDAVLFRRGTGQSDDSD. An N-acetylalanine modification is found at A2. A phosphoserine; by PKA mark is found at S4, S5, and S8. A P1 (binding site for GEMIN2) region spans residues 13 to 44; it reads PEQEDAVLFRRGTGQSDDSDIWDDTALIKAYD. At T25 the chain carries Phosphothreonine. Phosphoserine is present on residues S28 and S31. K51 participates in a covalent cross-link: Glycyl lysine isopeptide (Lys-Gly) (interchain with G-Cter in SUMO2). The interval 60–88 is disordered; sequence CETSGKSKTTPKRKPAKKNKSQKKNTAAS. A compositionally biased stretch (basic residues) spans 68–82; that stretch reads TTPKRKPAKKNKSQK. The residue at position 69 (T69) is a Phosphothreonine. The residue at position 85 (T85) is a Phosphothreonine; by PKA. The region spanning 91 to 151 is the Tudor domain; that stretch reads QWKVGDKCSA…LSPICEVANN (61 aa). Positions 97–209 are required for interaction with RPP20/POP7; it reads KCSAIWSEDG…MPGPRLGPGK (113 aa). The segment covering 156–166 has biased composition (low complexity); that stretch reads AQENENESQVS. The interval 156–222 is disordered; the sequence is AQENENESQV…KFNGPPPPPP (67 aa). A Phosphoserine; by PKA modification is found at S187. Residues 194–204 show a composition bias toward pro residues; sequence LPPPPPMPGPR. The span at 206-215 shows a compositional bias: low complexity; sequence GPGKPGLKFN. K209 is covalently cross-linked (Glycyl lysine isopeptide (Lys-Gly) (interchain with G-Cter in SUMO2)). The segment at 240 to 267 is P2 (binding site for SM B); sequence PPIIPPPPPICPDSLDDADALGSMLISW. Residues 279-294 are required for interaction with SYNCRIP; it reads GFRQNQKEGRCSHSLN.

This sequence belongs to the SMN family. Homooligomer; may form higher order homooligomers in the dimer to octamer range. Part of the core SMN complex that contains SMN1, GEMIN2/SIP1, DDX20/GEMIN3, GEMIN4, GEMIN5, GEMIN6, GEMIN7, GEMIN8 and STRAP/UNRIP. Part of the SMN-Sm complex that contains SMN1, GEMIN2/SIP1, DDX20/GEMIN3, GEMIN4, GEMIN5, GEMIN6, GEMIN7, GEMIN8, STRAP/UNRIP and the Sm proteins SNRPB, SNRPD1, SNRPD2, SNRPD3, SNRPE, SNRPF and SNRPG. Component of an import snRNP complex composed of KPNB1, RNUT1, SMN1 and ZNF259. Interacts with DDX20, FBL, NOLA1, RNUT1, SYNCRIP and with several spliceosomal snRNP core Sm proteins, including SNRPB, SNRPD1, SNRPD2, SNRPD3, SNRPE and ILF3. Interacts with GEMIN2; the interaction is direct. Interacts with GEMIN3; the interaction is direct. Interacts with GEMIN8; the interaction is direct. Interacts with SNRPB; the interaction is direct. Interacts (via Tudor domain) with SNRPD1 (via C-terminus); the interaction is direct. Interacts with SNRPD2; the interaction is direct. Interacts (via Tudor domain) with SNRPD3 (via C-terminus); the interaction is direct. Interacts with SNRPE; the interaction is direct. Interacts with OSTF1, LSM10, LSM11 and RPP20/POP7. Interacts (via C-terminal region) with ZPR1 (via C-terminal region). Interacts (via Tudor domain) with COIL. Interacts with SETX; recruits SETX to POLR2A. Interacts with POLR2A (via the C-terminal domain (CTD)). Interacts with PRMT5. Interacts with XRN2. Interacts (via C-terminus) with FMR1 (via C-terminus); the interaction is direct and occurs in a RNA-independent manner. Interacts (via Tudor domain) with SF3B2 ('Arg-508'-methylated form). Interacts with WRAP53/TCAB1. Interacts (via Tudor domain) with ELAVL4 in an RNA-independent manner; the interaction is required for localization of ELAVL4 to RNA granules. Interacts with FRG1.

Its subcellular location is the nucleus. It is found in the gem. It localises to the cajal body. The protein localises to the cytoplasm. The protein resides in the cytoplasmic granule. Its subcellular location is the perikaryon. It is found in the cell projection. It localises to the neuron projection. The protein localises to the axon. The protein resides in the myofibril. Its subcellular location is the sarcomere. It is found in the z line. Functionally, the SMN complex catalyzes the assembly of small nuclear ribonucleoproteins (snRNPs), the building blocks of the spliceosome, and thereby plays an important role in the splicing of cellular pre-mRNAs. Most spliceosomal snRNPs contain a common set of Sm proteins SNRPB, SNRPD1, SNRPD2, SNRPD3, SNRPE, SNRPF and SNRPG that assemble in a heptameric protein ring on the Sm site of the small nuclear RNA to form the core snRNP (Sm core). In the cytosol, the Sm proteins SNRPD1, SNRPD2, SNRPE, SNRPF and SNRPG are trapped in an inactive 6S pICln-Sm complex by the chaperone CLNS1A that controls the assembly of the core snRNP. To assemble core snRNPs, the SMN complex accepts the trapped 5Sm proteins from CLNS1A forming an intermediate. Binding of snRNA inside 5Sm ultimately triggers eviction of the SMN complex, thereby allowing binding of SNRPD3 and SNRPB to complete assembly of the core snRNP. Within the SMN complex, SMN1 acts as a structural backbone and together with GEMIN2 it gathers the Sm complex subunits. Ensures the correct splicing of U12 intron-containing genes that may be important for normal motor and proprioceptive neurons development. Also required for resolving RNA-DNA hybrids created by RNA polymerase II, that form R-loop in transcription terminal regions, an important step in proper transcription termination. May also play a role in the metabolism of small nucleolar ribonucleoprotein (snoRNPs). This chain is Survival motor neuron protein (SMN1), found in Pongo abelii (Sumatran orangutan).